Here is a 145-residue protein sequence, read N- to C-terminus: 3-dehydroquinate dehydratase (145 aa).

The active-site Proton acceptor is Tyr23. Positions 74, 80, and 87 each coordinate substrate. The active-site Proton donor is His100. Substrate-binding positions include 101–102 (LS) and Arg111.

The protein belongs to the type-II 3-dehydroquinase family. As to quaternary structure, homododecamer.

The catalysed reaction is 3-dehydroquinate = 3-dehydroshikimate + H2O. Its pathway is metabolic intermediate biosynthesis; chorismate biosynthesis; chorismate from D-erythrose 4-phosphate and phosphoenolpyruvate: step 3/7. In terms of biological role, catalyzes a trans-dehydration via an enolate intermediate. The polypeptide is 3-dehydroquinate dehydratase (Bacillus licheniformis (strain ATCC 14580 / DSM 13 / JCM 2505 / CCUG 7422 / NBRC 12200 / NCIMB 9375 / NCTC 10341 / NRRL NRS-1264 / Gibson 46)).